A 248-amino-acid polypeptide reads, in one-letter code: tRNA pseudouridine synthase A (248 aa).

The active-site Nucleophile is D53. Y111 serves as a coordination point for substrate.

This sequence belongs to the tRNA pseudouridine synthase TruA family. Homodimer.

The enzyme catalyses uridine(38/39/40) in tRNA = pseudouridine(38/39/40) in tRNA. Its function is as follows. Formation of pseudouridine at positions 38, 39 and 40 in the anticodon stem and loop of transfer RNAs. This is tRNA pseudouridine synthase A from Listeria monocytogenes serovar 1/2a (strain ATCC BAA-679 / EGD-e).